The chain runs to 82 residues: Small ribosomal subunit protein bS18 (82 aa).

Positions 1–20 (MVDINQIPTRRPFHRRRKTC) are disordered.

Belongs to the bacterial ribosomal protein bS18 family. In terms of assembly, part of the 30S ribosomal subunit. Forms a tight heterodimer with protein bS6.

In terms of biological role, binds as a heterodimer with protein bS6 to the central domain of the 16S rRNA, where it helps stabilize the platform of the 30S subunit. In Brucella anthropi (strain ATCC 49188 / DSM 6882 / CCUG 24695 / JCM 21032 / LMG 3331 / NBRC 15819 / NCTC 12168 / Alc 37) (Ochrobactrum anthropi), this protein is Small ribosomal subunit protein bS18.